We begin with the raw amino-acid sequence, 297 residues long: uncharacterized protein (297 aa).

Disordered stretches follow at residues 12–43, 65–85, 122–151, and 265–297; these read QNNN…TNDN, VPNS…DKPI, KVST…TNET, and SRLS…DQNN. Residues 65–79 are compositionally biased toward polar residues; that stretch reads VPNSINVNTSSSGNK. The span at 122–135 shows a compositional bias: low complexity; sequence KVSTTTTTTSSTSK. A compositionally biased stretch (polar residues) spans 140–151; it reads QTITKPNKTNET. Positions 268–287 are enriched in low complexity; the sequence is SSNNNNNNNNNNNNNNNNSN.

This is an uncharacterized protein from Dictyostelium discoideum (Social amoeba).